Here is a 356-residue protein sequence, read N- to C-terminus: Adenine deaminase (356 aa).

Histidine 23, histidine 25, and histidine 211 together coordinate Zn(2+). Glutamate 214 acts as the Proton donor in catalysis. Position 292 (aspartate 292) interacts with Zn(2+). Residue aspartate 293 participates in substrate binding.

It belongs to the metallo-dependent hydrolases superfamily. Adenosine and AMP deaminases family. Adenine deaminase type 2 subfamily. Requires Zn(2+) as cofactor.

Its subcellular location is the cytoplasm. It is found in the nucleus. The enzyme catalyses adenine + H2O + H(+) = hypoxanthine + NH4(+). Catalyzes the hydrolytic deamination of adenine to hypoxanthine. Plays an important role in the purine salvage pathway and in nitrogen catabolism. This Candida albicans (strain SC5314 / ATCC MYA-2876) (Yeast) protein is Adenine deaminase.